The following is a 163-amino-acid chain: MNGETLQRIVEEIVSRLHRRAQSTATLSVTQLRDADCPALFCQHASLRILLIDLPLLGQLADAETGDAAARKIHDALAFGIRVQLSLHSQLLPVIPVKKLARLPLVFTDEHGLPLVLHAGSVLSYRDVALLSRGRVVVHRKCIVTAMARDAANARNIQLIKQE.

This sequence belongs to the PduM family. As to quaternary structure, interacts with shell protein PduK.

It is found in the bacterial microcompartment. It functions in the pathway polyol metabolism; 1,2-propanediol degradation. Functionally, plays an essential role in assembly and/or stability of the bacterial microcompartment (BMC) dedicated to 1,2-propanediol (1,2-PD) degradation. Overexpression impairs BMC formation. In terms of biological role, the 1,2-PD-specific bacterial microcompartment (BMC) concentrates low levels of 1,2-PD catabolic enzymes, concentrates volatile reaction intermediates thus enhancing pathway flux and keeps the level of toxic, mutagenic propionaldehyde low. This Salmonella typhimurium (strain LT2 / SGSC1412 / ATCC 700720) protein is Bacterial microcompartment assembly protein PduM.